Here is a 244-residue protein sequence, read N- to C-terminus: PHD finger protein ALFIN-LIKE 2 (244 aa).

The span at 137 to 148 (LSDRKHGRDNKS) shows a compositional bias: basic and acidic residues. Residues 137-178 (LSDRKHGRDNKSGADNGSKSRHSGKRANDVQTKTSRPAVVDD) are disordered. The PHD-type zinc-finger motif lies at 187 to 239 (ETLCGTCGGRYNANEFWIGCDICERWFHGKCVRITPAKAEHIKHYKCPDCSSS).

It belongs to the Alfin family. In terms of assembly, interacts with H3K4me3 and to a lesser extent with H3K4me2.

Its subcellular location is the nucleus. Its function is as follows. Histone-binding component that specifically recognizes H3 tails trimethylated on 'Lys-4' (H3K4me3), which mark transcription start sites of virtually all active genes. The protein is PHD finger protein ALFIN-LIKE 2 of Oryza sativa subsp. indica (Rice).